The sequence spans 401 residues: Mannan endo-1,4-beta-mannosidase 3 (401 aa).

Residues 1 to 24 form the signal peptide; that stretch reads MSYTHRRSCISGLFLLLLALSCEA. Tryptophan 84 and asparagine 198 together coordinate substrate. The active-site Proton donor is the glutamate 199. Tyrosine 277 is a substrate binding site. Catalysis depends on glutamate 317, which acts as the Nucleophile. Tryptophan 356 serves as a coordination point for substrate.

It belongs to the glycosyl hydrolase 5 (cellulase A) family.

It localises to the secreted. The catalysed reaction is Random hydrolysis of (1-&gt;4)-beta-D-mannosidic linkages in mannans, galactomannans and glucomannans.. The protein is Mannan endo-1,4-beta-mannosidase 3 (MAN3) of Solanum lycopersicum (Tomato).